We begin with the raw amino-acid sequence, 307 residues long: HPr kinase/phosphorylase (307 aa).

Catalysis depends on residues H136 and K157. 151-158 (GESGIGKS) contributes to the ATP binding site. S158 contributes to the Mg(2+) binding site. D175 functions as the Proton acceptor; for phosphorylation activity. Proton donor; for dephosphorylation activity in the catalytic mechanism. An important for the catalytic mechanism of both phosphorylation and dephosphorylation region spans residues 198–207 (LEVRGMGIID). Residue E199 participates in Mg(2+) binding. Residue R240 is part of the active site. The interval 261-266 (PIRPGR) is important for the catalytic mechanism of dephosphorylation.

It belongs to the HPrK/P family. As to quaternary structure, homohexamer. The cofactor is Mg(2+).

It catalyses the reaction [HPr protein]-L-serine + ATP = [HPr protein]-O-phospho-L-serine + ADP + H(+). The enzyme catalyses [HPr protein]-O-phospho-L-serine + phosphate + H(+) = [HPr protein]-L-serine + diphosphate. Functionally, catalyzes the ATP- as well as the pyrophosphate-dependent phosphorylation of a specific serine residue in HPr, a phosphocarrier protein of the phosphoenolpyruvate-dependent sugar phosphotransferase system (PTS). HprK/P also catalyzes the pyrophosphate-producing, inorganic phosphate-dependent dephosphorylation (phosphorolysis) of seryl-phosphorylated HPr (P-Ser-HPr). The two antagonistic activities of HprK/P are regulated by several intracellular metabolites, which change their concentration in response to the absence or presence of rapidly metabolisable carbon sources (glucose, fructose, etc.) in the growth medium. Therefore, by controlling the phosphorylation state of HPr, HPrK/P is a sensor enzyme that plays a major role in the regulation of carbon metabolism and sugar transport: it mediates carbon catabolite repression (CCR), and regulates PTS-catalyzed carbohydrate uptake and inducer exclusion. In Clostridium perfringens (strain ATCC 13124 / DSM 756 / JCM 1290 / NCIMB 6125 / NCTC 8237 / Type A), this protein is HPr kinase/phosphorylase.